Here is a 758-residue protein sequence, read N- to C-terminus: Inhibitor of nuclear factor kappa-B kinase subunit alpha (758 aa).

Residues 15–301 (WVMKERLGTG…LNTDSKQPQC (287 aa)) enclose the Protein kinase domain. Residues 21 to 29 (LGTGGFGHV) and Lys-44 each bind ATP. The active-site Proton acceptor is the Asp-145. The tract at residues 456 to 477 (LLRFNTNLTRYKNMMFSFSQQL) is leucine-zipper. An NEMO-binding region spans residues 741 to 746 (QDWSWT).

It belongs to the protein kinase superfamily. Ser/Thr protein kinase family. I-kappa-B kinase subfamily. In terms of assembly, directly interacts with ikbkg/nemo.

The protein resides in the cytoplasm. The protein localises to the nucleus. It carries out the reaction L-seryl-[I-kappa-B protein] + ATP = O-phospho-L-seryl-[I-kappa-B protein] + ADP + H(+). Its activity is regulated as follows. Activated when phosphorylated and inactivated when dephosphorylated. Its function is as follows. Phosphorylates inhibitors of NF-kappa-B thus leading to the dissociation of the inhibitor/NF-kappa-B complex and ultimately the degradation of the inhibitor. Phosphorylates 'Ser-10' of histone H3 at NF-kappa-B-regulated promoters during inflammatory responses triggered by cytokines. The sequence is that of Inhibitor of nuclear factor kappa-B kinase subunit alpha (chuk) from Danio rerio (Zebrafish).